The primary structure comprises 237 residues: MKPKTFYNLLAEQNLPLSDQQKEQFERYFELLVEWNEKINLTAITDKEEVYLKHFYDSIAPILQGLIPNETIKLLDIGAGAGFPSLPMKILYPELDVTIIDSLNKRINFLQLLAQELDLNGVHFYHGRAEDFAQDKNFRAQYDFVTARAVARMQVLSELTIPYLKVGGKLLALKASNAPEELLEAKNALNLLFSKVEDNLSYALPNRDPRYITVVEKKKETPNKYPRKAGMPNKRPL.

S-adenosyl-L-methionine is bound by residues Gly78, Phe83, Ala129 to Glu130, and Arg148. The interval Lys218 to Leu237 is disordered.

It belongs to the methyltransferase superfamily. RNA methyltransferase RsmG family.

It is found in the cytoplasm. In terms of biological role, specifically methylates the N7 position of a guanine in 16S rRNA. The polypeptide is Ribosomal RNA small subunit methyltransferase G (Streptococcus pneumoniae serotype 19F (strain G54)).